The chain runs to 138 residues: Large ribosomal subunit protein uL16 (138 aa).

It belongs to the universal ribosomal protein uL16 family. As to quaternary structure, part of the 50S ribosomal subunit.

Functionally, binds 23S rRNA and is also seen to make contacts with the A and possibly P site tRNAs. This chain is Large ribosomal subunit protein uL16, found in Paramagnetospirillum magneticum (strain ATCC 700264 / AMB-1) (Magnetospirillum magneticum).